Reading from the N-terminus, the 1012-residue chain is Probable inorganic carbon transporter subunit DabA (1012 aa).

Positions 489, 491, 679, and 694 each coordinate Zn(2+).

Belongs to the inorganic carbon transporter (TC 9.A.2) DabA family. In terms of assembly, forms a complex with DabB. Zn(2+) is required as a cofactor.

It is found in the cell inner membrane. Its function is as follows. Part of an energy-coupled inorganic carbon pump. This is Probable inorganic carbon transporter subunit DabA from Dechloromonas aromatica (strain RCB).